The following is a 1485-amino-acid chain: Dicer-like protein 2 (1485 aa).

Low complexity predominate over residues 1 to 11; it reads MSSQDESASSS. The disordered stretch occupies residues 1 to 61; it reads MSSQDESASS…EPQPSGNGPR (61 aa). The Helicase ATP-binding domain maps to 72–250; it reads MFQASMQQNI…MEDLESSLDS (179 aa). 85 to 92 contacts ATP; that stretch reads MDTGSGKT. Positions 193 to 196 match the DEAH box motif; it reads DEAH. The Helicase C-terminal domain maps to 415–579; sequence KLQVLLRILR…RYENDMRELD (165 aa). The region spanning 609–712 is the Dicer dsRNA-binding fold domain; sequence AKGHLEHFCR…LPIRESDFVD (104 aa). RNase III domains are found at residues 988–1127 and 1168–1358; these read AQEL…IEGG and LGPL…VDSG. 3 residues coordinate Mg(2+): Glu-1208, Asp-1344, and Glu-1347. The DRBM domain occupies 1388–1469; it reads HPKEELGRVA…ALEVIRVWEE (82 aa).

The protein belongs to the helicase family. Dicer subfamily. It depends on Mg(2+) as a cofactor. Requires Mn(2+) as cofactor.

Functionally, dicer-like endonuclease involved in cleaving double-stranded RNA in the RNA interference (RNAi) pathway. Produces 21 to 25 bp dsRNAs (siRNAs) which target the selective destruction of homologous RNAs leading to sequence-specific suppression of gene expression, called post-transcriptional gene silencing (PTGS). Part of a broad host defense response against viral infection and transposons. This chain is Dicer-like protein 2 (DCL2), found in Pyricularia oryzae (strain 70-15 / ATCC MYA-4617 / FGSC 8958) (Rice blast fungus).